A 610-amino-acid chain; its full sequence is Putative protein tag-250 (610 aa).

Tudor domains are found at residues 149-260 (VALK…LLPP) and 386-506 (MPMS…KIGG).

The chain is Putative protein tag-250 (tag-250) from Caenorhabditis elegans.